A 599-amino-acid chain; its full sequence is Elongation factor 4 (599 aa).

In terms of domain architecture, tr-type G spans 5-187; that stretch reads SKIRNFSIVA…AIVKRLPAPT (183 aa). GTP contacts are provided by residues 17-22 and 134-137; these read DHGKST and NKID.

It belongs to the TRAFAC class translation factor GTPase superfamily. Classic translation factor GTPase family. LepA subfamily.

It is found in the cell inner membrane. It catalyses the reaction GTP + H2O = GDP + phosphate + H(+). Functionally, required for accurate and efficient protein synthesis under certain stress conditions. May act as a fidelity factor of the translation reaction, by catalyzing a one-codon backward translocation of tRNAs on improperly translocated ribosomes. Back-translocation proceeds from a post-translocation (POST) complex to a pre-translocation (PRE) complex, thus giving elongation factor G a second chance to translocate the tRNAs correctly. Binds to ribosomes in a GTP-dependent manner. In Ruegeria sp. (strain TM1040) (Silicibacter sp.), this protein is Elongation factor 4.